Reading from the N-terminus, the 181-residue chain is Large ribosomal subunit protein bL17 (181 aa).

The segment at 129 to 181 (AEKSEKSAKTAKAAKAPAKKATAKKASTKAVAAKKKAVKKAQKKDRAASAARA) is disordered. A compositionally biased stretch (basic residues) spans 145-171 (PAKKATAKKASTKAVAAKKKAVKKAQK).

The protein belongs to the bacterial ribosomal protein bL17 family. As to quaternary structure, part of the 50S ribosomal subunit. Contacts protein L32.

The sequence is that of Large ribosomal subunit protein bL17 from Bdellovibrio bacteriovorus (strain ATCC 15356 / DSM 50701 / NCIMB 9529 / HD100).